The sequence spans 413 residues: uncharacterized protein (413 aa).

The N-terminal stretch at Met-1–Ala-22 is a signal peptide.

It localises to the periplasm. Its function is as follows. May be involved in ulvan degradation. Ulvan is the main polysaccharide component of the Ulvales (green seaweed) cell wall. It is composed of disaccharide building blocks comprising 3-sulfated rhamnose (Rha3S) linked to D-glucuronic acid (GlcA), L-iduronic acid (IduA), or D-xylose (Xyl). This is an uncharacterized protein from Formosa agariphila (strain DSM 15362 / KCTC 12365 / LMG 23005 / KMM 3901 / M-2Alg 35-1).